We begin with the raw amino-acid sequence, 488 residues long: Inosine-5'-monophosphate dehydrogenase (488 aa).

CBS domains are found at residues 93–149 (VVTD…NQPV) and 153–214 (MTPK…CKDE). Residues D248 and 248-250 (DSS) each bind NAD(+). An N6-acetyllysine modification is found at K267. 298 to 300 (GIG) lines the NAD(+) pocket. Residues G300 and G302 each coordinate K(+). Position 303 (S303) interacts with IMP. A K(+)-binding site is contributed by C305. The active-site Thioimidate intermediate is C305. IMP contacts are provided by residues 338–340 (DGG), 361–362 (GS), and 385–389 (YRGMG). R401 (proton acceptor) is an active-site residue. Residue E415 participates in IMP binding. K428 carries the N6-acetyllysine modification. Residues E469, S470, and H471 each coordinate K(+).

It belongs to the IMPDH/GMPR family. In terms of assembly, homotetramer. K(+) serves as cofactor.

The enzyme catalyses IMP + NAD(+) + H2O = XMP + NADH + H(+). It participates in purine metabolism; XMP biosynthesis via de novo pathway; XMP from IMP: step 1/1. Mycophenolic acid (MPA) is a non-competitive inhibitor that prevents formation of the closed enzyme conformation by binding to the same site as the amobile flap. In contrast, mizoribine monophosphate (MZP) is a competitive inhibitor that induces the closed conformation. MPA is a potent inhibitor of mammalian IMPDHs but a poor inhibitor of the bacterial enzymes. MZP is a more potent inhibitor of bacterial IMPDH. Catalyzes the conversion of inosine 5'-phosphate (IMP) to xanthosine 5'-phosphate (XMP), the first committed and rate-limiting step in the de novo synthesis of guanine nucleotides, and therefore plays an important role in the regulation of cell growth. The protein is Inosine-5'-monophosphate dehydrogenase of Escherichia coli O157:H7.